Here is a 159-residue protein sequence, read N- to C-terminus: Protein B1 (159 aa).

Residues 1–15 show a composition bias toward basic residues; the sequence is MQKNMKTKKTKKRGR. 2 disordered regions span residues 1 to 100 and 133 to 159; these read MQKN…RTRE and PGHG…DPPR. Residues 16–31 show a composition bias toward basic and acidic residues; it reads KEGNTPETERRMEPAR. The segment covering 85–96 has biased composition (basic residues); it reads RGRHIHTRGART.

This chain is Protein B1 (B1), found in Human herpesvirus 6B (strain Z29) (HHV-6 variant B).